We begin with the raw amino-acid sequence, 585 residues long: Probable glucomannan 4-beta-mannosyltransferase 7 (585 aa).

Residues 87 to 107 (VIAPTLQVAVWVCMVMSVMLV) form a helical membrane-spanning segment. The active site involves Asp-188. Substrate is bound by residues Asp-247 and Asp-249. Asp-341 is an active-site residue. Helical transmembrane passes span 420–440 (VVAP…SVMI), 443–463 (LFIP…ITTI), 534–554 (LPEI…LIFH), and 563–583 (LYLQ…NFAC).

It belongs to the glycosyltransferase 2 family. Plant cellulose synthase-like A subfamily.

Its subcellular location is the golgi apparatus membrane. The enzyme catalyses GDP-mannose + (glucomannan)n = GDP + (glucomannan)n+1.. Its function is as follows. Probable mannan synthase which consists of a 4-beta-mannosyltransferase activity on mannan using GDP-mannose. The beta-1,4-mannan product is the backbone for galactomannan synthesis by galactomannan galactosyltransferase. Galactomannan is a noncellulosic polysaccharides of plant cell wall. This is Probable glucomannan 4-beta-mannosyltransferase 7 from Oryza sativa subsp. japonica (Rice).